Here is a 330-residue protein sequence, read N- to C-terminus: Glycerol-3-phosphate dehydrogenase [NAD(P)+] (330 aa).

3 residues coordinate NADPH: Trp13, Arg33, and Lys103. Sn-glycerol 3-phosphate contacts are provided by Lys103, Gly131, and Thr133. NADPH is bound at residue Ala135. Positions 186, 239, 249, 250, and 251 each coordinate sn-glycerol 3-phosphate. Lys186 (proton acceptor) is an active-site residue. Arg250 contacts NADPH. 2 residues coordinate NADPH: Val274 and Glu276.

Belongs to the NAD-dependent glycerol-3-phosphate dehydrogenase family.

It is found in the cytoplasm. The enzyme catalyses sn-glycerol 3-phosphate + NAD(+) = dihydroxyacetone phosphate + NADH + H(+). It catalyses the reaction sn-glycerol 3-phosphate + NADP(+) = dihydroxyacetone phosphate + NADPH + H(+). The protein operates within membrane lipid metabolism; glycerophospholipid metabolism. Catalyzes the reduction of the glycolytic intermediate dihydroxyacetone phosphate (DHAP) to sn-glycerol 3-phosphate (G3P), the key precursor for phospholipid synthesis. The protein is Glycerol-3-phosphate dehydrogenase [NAD(P)+] of Erythrobacter litoralis (strain HTCC2594).